Consider the following 35-residue polypeptide: Probable endonuclease 4 (35 aa).

Glu15 serves as a coordination point for Zn(2+).

It belongs to the AP endonuclease 2 family. It depends on Zn(2+) as a cofactor.

The catalysed reaction is Endonucleolytic cleavage to 5'-phosphooligonucleotide end-products.. Endonuclease IV plays a role in DNA repair. It cleaves phosphodiester bonds at apurinic or apyrimidinic (AP) sites, generating a 3'-hydroxyl group and a 5'-terminal sugar phosphate. The polypeptide is Probable endonuclease 4 (nfo) (Yersinia enterocolitica).